The following is a 336-amino-acid chain: Ferredoxin--NADP reductase (336 aa).

FAD is bound by residues Asp37, Gln45, Tyr50, Val90, Phe124, Asp286, and Thr327.

The protein belongs to the ferredoxin--NADP reductase type 2 family. Homodimer. FAD is required as a cofactor.

The catalysed reaction is 2 reduced [2Fe-2S]-[ferredoxin] + NADP(+) + H(+) = 2 oxidized [2Fe-2S]-[ferredoxin] + NADPH. This Enterococcus faecalis (strain ATCC 700802 / V583) protein is Ferredoxin--NADP reductase.